We begin with the raw amino-acid sequence, 133 residues long: Small ribosomal subunit protein uS9 (133 aa).

A compositionally biased stretch (basic and acidic residues) spans 102 to 113 (KVEGYLSRDPRA). Residues 102 to 133 (KVEGYLSRDPRAKERRKYGLKKARKAPQFSKR) are disordered. A compositionally biased stretch (basic residues) spans 114–133 (KERRKYGLKKARKAPQFSKR).

The protein belongs to the universal ribosomal protein uS9 family.

This is Small ribosomal subunit protein uS9 from Gloeobacter violaceus (strain ATCC 29082 / PCC 7421).